Reading from the N-terminus, the 384-residue chain is Lipid-A-disaccharide synthase (384 aa).

Belongs to the LpxB family.

It catalyses the reaction a lipid X + a UDP-2-N,3-O-bis[(3R)-3-hydroxyacyl]-alpha-D-glucosamine = a lipid A disaccharide + UDP + H(+). It participates in bacterial outer membrane biogenesis; LPS lipid A biosynthesis. Condensation of UDP-2,3-diacylglucosamine and 2,3-diacylglucosamine-1-phosphate to form lipid A disaccharide, a precursor of lipid A, a phosphorylated glycolipid that anchors the lipopolysaccharide to the outer membrane of the cell. The sequence is that of Lipid-A-disaccharide synthase from Gloeothece citriformis (strain PCC 7424) (Cyanothece sp. (strain PCC 7424)).